Consider the following 334-residue polypeptide: MAEFHFFCIDAHTCGNPVRVVTGGSIPFLQGNSMSEKRQHFLREFDWIRKGLMFEPRGHDMMSGSILYPPTDPANDAGVLFIETSGCLPMCGHGTIGTVTVAIEQNLIRPKTPGVLNLEVPAGLVRAEYQQEGKKVTSVKITNIKSYLAAEKLTVDCPDLGLLTVDVAYGGNFYAIVDPQPNFPGLEHYKAEQLIGWARVMRERMNEQYTFVHPENPTINGLSHILWTGKPIAETSTARNAVFYGDKAIDRSPCGTGTSARMAQWYAQGRLKPGETFVHESIIGSIFNGRIEAETELANQPAIVPSIEGWARIHGYNHLILDEEDPYVFGFQVI.

The Proton acceptor role is filled by Cys91. Substrate contacts are provided by residues 92–93, His224, and Asp250; that span reads GH. The Proton donor role is filled by Cys254. 255–256 is a substrate binding site; that stretch reads GT.

The protein belongs to the proline racemase family.

It catalyses the reaction trans-4-hydroxy-L-proline = cis-4-hydroxy-D-proline. Catalyzes the epimerization of trans-4-hydroxy-L-proline (t4LHyp) to cis-4-hydroxy-D-proline (c4DHyp). Is likely involved in a degradation pathway that converts t4LHyp to alpha-ketoglutarate. Displays no proline racemase activity. The chain is 4-hydroxyproline 2-epimerase from Spirosoma linguale (strain ATCC 33905 / DSM 74 / LMG 10896 / Claus 1).